The following is a 248-amino-acid chain: Aspartate/glutamate leucyltransferase (248 aa).

The protein belongs to the R-transferase family. Bpt subfamily.

The protein localises to the cytoplasm. It catalyses the reaction N-terminal L-glutamyl-[protein] + L-leucyl-tRNA(Leu) = N-terminal L-leucyl-L-glutamyl-[protein] + tRNA(Leu) + H(+). It carries out the reaction N-terminal L-aspartyl-[protein] + L-leucyl-tRNA(Leu) = N-terminal L-leucyl-L-aspartyl-[protein] + tRNA(Leu) + H(+). In terms of biological role, functions in the N-end rule pathway of protein degradation where it conjugates Leu from its aminoacyl-tRNA to the N-termini of proteins containing an N-terminal aspartate or glutamate. This is Aspartate/glutamate leucyltransferase from Methylobacterium nodulans (strain LMG 21967 / CNCM I-2342 / ORS 2060).